The following is a 275-amino-acid chain: Myoblast determination protein 1 homolog (275 aa).

Positions Asp84–Leu135 constitute a bHLH domain. Residues Glu234–Leu275 are disordered. The segment covering Leu249–Leu275 has biased composition (polar residues).

Efficient DNA binding requires dimerization with another bHLH protein. From mid-gastrula to just before somite formation, expressed in cells adjacent to axial mesoderm. Subsequently, during the anterior-to-posterior wave of somite formation and maturation, expressed within particular regions of each somite. Expressed in both muscle and non-muscle cells.

Its subcellular location is the nucleus. Its function is as follows. May act as a transcriptional activator that promotes transcription of muscle-specific target genes and plays a role in muscle differentiation. The protein is Myoblast determination protein 1 homolog (myod1) of Danio rerio (Zebrafish).